The sequence spans 181 residues: Cyclic AMP-dependent transcription factor ATF-3 (181 aa).

Residue K78 forms a Glycyl lysine isopeptide (Lys-Gly) (interchain with G-Cter in SUMO2) linkage. Residues 86-149 (DERKKRRRER…QHLIYMLNLH (64 aa)) form the bZIP domain. The interval 88–110 (RKKRRRERNKIAAAKCRNKKKEK) is basic motif. The interval 114-142 (LQKESEKLESVNAELKAQIEELKNEKQHL) is leucine-zipper. At T162 the chain carries Phosphothreonine. K175 is covalently cross-linked (Glycyl lysine isopeptide (Lys-Gly) (interchain with G-Cter in SUMO2)).

The protein belongs to the bZIP family. ATF subfamily. In terms of assembly, binds DNA as a homodimer or a heterodimer. Interacts with KAT5; promoting KAT5 autoacetylation and KAT5 deubiquitination by USP7.

The protein localises to the nucleus. Its function is as follows. This protein binds the cAMP response element (CRE) (consensus: 5'-GTGACGT[AC][AG]-3'), a sequence present in many viral and cellular promoters. Represses transcription from promoters with ATF sites. It may repress transcription by stabilizing the binding of inhibitory cofactors at the promoter. Functionally, activates transcription presumably by sequestering inhibitory cofactors away from the promoters. In terms of biological role, stress-induced isoform, counteracts the transcriptional repression of isoform 1. This Homo sapiens (Human) protein is Cyclic AMP-dependent transcription factor ATF-3.